The sequence spans 369 residues: RNA pseudouridine synthase 5 (369 aa).

The 58-residue stretch at 47 to 104 (APLLGWIQRIQNGQIQIDGEVVKDPNTLLRSGSKLVYSRLPWKEPDTPYSLEVLYEDD) folds into the S4 RNA-binding domain.

This sequence belongs to the pseudouridine synthase RluA family.

It carries out the reaction a uridine in RNA = a pseudouridine in RNA. The protein is RNA pseudouridine synthase 5 of Arabidopsis thaliana (Mouse-ear cress).